The chain runs to 785 residues: Terminal nucleotidyltransferase 4A (785 aa).

Positions 56-184 (AAGRAAPAAG…QFHPGRRKRE (129 aa)) are disordered. Positions 68–85 (GPAPAASSPPPAPGPAAL) are enriched in pro residues. 2 stretches are compositionally biased toward low complexity: residues 86-98 (PPALLTALGPAAD) and 106-145 (SPSLSSSSSSSSSNAESGTESPGCSSSSSSSTSLGRAGSG). 2 residues coordinate Mg(2+): D290 and D292. 4 residues coordinate ATP: G353, K378, S396, and Y397. The region spanning 421–480 (NLGMLLVEFFELYGRNFNYLKTGIRIKEGGAYIAKEEIMKAMTSGYRPSMLCIEDPLLPG) is the PAP-associated domain. ATP-binding residues include N481 and R485. Residues 593–611 (PQLLSSGSSASSVSSLSGS) show a composition bias toward low complexity. 2 disordered regions span residues 593–625 (PQLLSSGSSASSVSSLSGSDIDSDTPPCTTPSV) and 731–785 (KGSH…SLSR). Basic residues predominate over residues 757 to 774 (RGHHQYNRTGWRRKKHAH).

Belongs to the DNA polymerase type-B-like family. Component of a nuclear TRAMP-like complex, an ATP-dependent exosome regulatory complex consisting of a helicase (MTREX), an oligadenylate polymerase (TENT4B or TENT4A), and a substrate specific RNA-binding factor (ZCCHC7 or ZCCHC8). Several TRAMP-like complexes exist with specific compositions and are associated with nuclear, or nucleolar RNA exosomes. Mg(2+) serves as cofactor. The cofactor is Mn(2+).

Its subcellular location is the cytoplasm. It is found in the nucleus. The protein resides in the nucleoplasm. It carries out the reaction RNA(n) + ATP = RNA(n)-3'-adenine ribonucleotide + diphosphate. Its function is as follows. Terminal nucleotidyltransferase that catalyzes preferentially the transfer of ATP and GTP on RNA 3' poly(A) tail creating a heterogeneous 3' poly(A) tail leading to mRNAs stabilization by protecting mRNAs from active deadenylation. Also functions as a catalytic subunit of a TRAMP-like complex which has a poly(A) RNA polymerase activity and is involved in a post-transcriptional quality control mechanism. Polyadenylation with short oligo(A) tails is required for the degradative activity of the exosome on several of its nuclear RNA substrates. Has no terminal uridylyltransferase activity, and does not play a role in replication-dependent histone mRNA degradation via uridylation. The chain is Terminal nucleotidyltransferase 4A from Mus musculus (Mouse).